The primary structure comprises 154 residues: MGLSDGEWQLVLNVWGKVEADIPSHGQEVLIRLFKGHPETLEKFDKFKHLKSEDEMKASEDLKKHGATVLTALGGILKKKGHHEAEIKPLAQSHATKHKIPVKYLELISESIIQVLQSKHPGDFGADAQGAMNKALELFRNDMAAKYKELGFQG.

In terms of domain architecture, Globin spans 2-148 (GLSDGEWQLV…FRNDMAAKYK (147 aa)). At Ser4 the chain carries Phosphoserine. A nitrite-binding site is contributed by His65. His65 provides a ligand contact to O2. At Thr68 the chain carries Phosphothreonine. His94 lines the heme b pocket.

It belongs to the globin family. In terms of assembly, monomeric.

The protein resides in the cytoplasm. The protein localises to the sarcoplasm. It carries out the reaction Fe(III)-heme b-[protein] + nitric oxide + H2O = Fe(II)-heme b-[protein] + nitrite + 2 H(+). The catalysed reaction is H2O2 + AH2 = A + 2 H2O. Functionally, monomeric heme protein which primary function is to store oxygen and facilitate its diffusion within muscle tissues. Reversibly binds oxygen through a pentacoordinated heme iron and enables its timely and efficient release as needed during periods of heightened demand. Depending on the oxidative conditions of tissues and cells, and in addition to its ability to bind oxygen, it also has a nitrite reductase activity whereby it regulates the production of bioactive nitric oxide. Under stress conditions, like hypoxia and anoxia, it also protects cells against reactive oxygen species thanks to its pseudoperoxidase activity. The chain is Myoglobin (MB) from Erythrocebus patas (Red guenon).